A 100-amino-acid polypeptide reads, in one-letter code: Small ribosomal subunit protein uS14c (100 aa).

It belongs to the universal ribosomal protein uS14 family. Part of the 30S ribosomal subunit.

The protein resides in the plastid. It localises to the chloroplast. In terms of biological role, binds 16S rRNA, required for the assembly of 30S particles. This chain is Small ribosomal subunit protein uS14c, found in Fagopyrum esculentum subsp. ancestrale (Wild buckwheat).